The following is a 138-amino-acid chain: Spermidine export protein MdtJ (138 aa).

4 helical membrane-spanning segments follow: residues 1-21 (MIYWLFLAMAIITEVIGTLSM), 30-50 (VVGMAVMYIMIATSYILLAMA), 54-74 (VALGVAYALWEGVGILFITVF), and 81-101 (ESLSLMKVGGLALLITGIMLI).

Belongs to the drug/metabolite transporter (DMT) superfamily. Small multidrug resistance (SMR) (TC 2.A.7.1) family. MdtJ subfamily. As to quaternary structure, forms a complex with MdtI.

It is found in the cell inner membrane. Functionally, catalyzes the excretion of spermidine. The polypeptide is Spermidine export protein MdtJ (Photorhabdus laumondii subsp. laumondii (strain DSM 15139 / CIP 105565 / TT01) (Photorhabdus luminescens subsp. laumondii)).